Here is a 480-residue protein sequence, read N- to C-terminus: DnaJ homolog subfamily A member 3, mitochondrial (480 aa).

The residue at position 58 (Arg-58) is an Omega-N-methylarginine; by CARM1. The J domain occupies 93–158 (DYYQILGVPR…VKRKQYDAYG (66 aa)). At Lys-134 the chain carries N6-acetyllysine. Residues 223–301 (GVNKEFTVNI…CRGAGQAKQK (79 aa)) form a CR-type zinc finger. Cys-236 is a binding site for Zn(2+). 4 CXXCXGXG motif repeats span residues 236-243 (CERCDGKG), 253-260 (CHYCGGSG), 275-282 (CRRCGGRG), and 289-296 (CVVCRGAG). Omega-N-methylarginine; by CARM1 is present on Arg-238. Cys-239, Cys-253, Cys-256, Cys-275, Cys-278, Cys-289, and Cys-292 together coordinate Zn(2+). Arg-293 is subject to Omega-N-methylarginine; by CARM1. A Phosphoserine modification is found at Ser-398. Positions 437-468 (TVNGVTHTSTGGRTMDSSAGSKDRREAGEDNE) are disordered. Over residues 439-456 (NGVTHTSTGGRTMDSSAG) the composition is skewed to polar residues.

In terms of assembly, interacts with JAK2, HSPA9B and IFN-gammaR2 chain. Interacts with Ras GTPase-activating protein 1 (RASA1). Isoform 2 interacts with MUSK (via the cytoplasmic domain). Post-translationally, tyrosine phosphorylated.

The protein localises to the mitochondrion matrix. It localises to the cytoplasm. It is found in the cytosol. The protein resides in the postsynaptic cell membrane. Functionally, modulates apoptotic signal transduction or effector structures within the mitochondrial matrix. Affect cytochrome C release from the mitochondria and caspase 3 activation, but not caspase 8 activation. Isoform 1 increases apoptosis triggered by both TNF and the DNA-damaging agent mytomycin C; in sharp contrast, isoform 2 suppresses apoptosis. Can modulate IFN-gamma-mediated transcriptional activity. Isoform 2 may play a role in neuromuscular junction development as an effector of the MUSK signaling pathway. The polypeptide is DnaJ homolog subfamily A member 3, mitochondrial (Dnaja3) (Mus musculus (Mouse)).